A 210-amino-acid polypeptide reads, in one-letter code: dITP/XTP pyrophosphatase (210 aa).

Residue 19–24 (SNNPGK) coordinates substrate. Asp-51 and Asp-80 together coordinate Mg(2+). The active-site Proton acceptor is the Asp-80. Substrate is bound by residues Ser-81, 166 to 169 (FGYD), Lys-189, and 194 to 195 (HR).

The protein belongs to the HAM1 NTPase family. Homodimer. It depends on Mg(2+) as a cofactor.

It carries out the reaction XTP + H2O = XMP + diphosphate + H(+). The catalysed reaction is dITP + H2O = dIMP + diphosphate + H(+). It catalyses the reaction ITP + H2O = IMP + diphosphate + H(+). Pyrophosphatase that catalyzes the hydrolysis of nucleoside triphosphates to their monophosphate derivatives, with a high preference for the non-canonical purine nucleotides XTP (xanthosine triphosphate), dITP (deoxyinosine triphosphate) and ITP. Seems to function as a house-cleaning enzyme that removes non-canonical purine nucleotides from the nucleotide pool, thus preventing their incorporation into DNA/RNA and avoiding chromosomal lesions. In Burkholderia mallei (strain ATCC 23344), this protein is dITP/XTP pyrophosphatase.